A 175-amino-acid chain; its full sequence is SsrA-binding protein (175 aa).

The protein belongs to the SmpB family.

The protein resides in the cytoplasm. Functionally, required for rescue of stalled ribosomes mediated by trans-translation. Binds to transfer-messenger RNA (tmRNA), required for stable association of tmRNA with ribosomes. tmRNA and SmpB together mimic tRNA shape, replacing the anticodon stem-loop with SmpB. tmRNA is encoded by the ssrA gene; the 2 termini fold to resemble tRNA(Ala) and it encodes a 'tag peptide', a short internal open reading frame. During trans-translation Ala-aminoacylated tmRNA acts like a tRNA, entering the A-site of stalled ribosomes, displacing the stalled mRNA. The ribosome then switches to translate the ORF on the tmRNA; the nascent peptide is terminated with the 'tag peptide' encoded by the tmRNA and targeted for degradation. The ribosome is freed to recommence translation, which seems to be the essential function of trans-translation. This chain is SsrA-binding protein, found in Prochlorococcus marinus subsp. pastoris (strain CCMP1986 / NIES-2087 / MED4).